The sequence spans 338 residues: Ketol-acid reductoisomerase (NADP(+)) (338 aa).

The KARI N-terminal Rossmann domain occupies 1-181 (MKVFYDKDAD…GGGRAGIIET (181 aa)). Residues 24-27 (YGSQ), R47, and S52 contribute to the NADP(+) site. Residue H107 is part of the active site. Residue G133 participates in NADP(+) binding. A KARI C-terminal knotted domain is found at 182 to 327 (NFREETETDL…EKLRAMMPWI (146 aa)). Positions 190, 194, 226, and 230 each coordinate Mg(2+). Substrate is bound at residue S251.

It belongs to the ketol-acid reductoisomerase family. Mg(2+) is required as a cofactor.

It carries out the reaction (2R)-2,3-dihydroxy-3-methylbutanoate + NADP(+) = (2S)-2-acetolactate + NADPH + H(+). It catalyses the reaction (2R,3R)-2,3-dihydroxy-3-methylpentanoate + NADP(+) = (S)-2-ethyl-2-hydroxy-3-oxobutanoate + NADPH + H(+). It functions in the pathway amino-acid biosynthesis; L-isoleucine biosynthesis; L-isoleucine from 2-oxobutanoate: step 2/4. Its pathway is amino-acid biosynthesis; L-valine biosynthesis; L-valine from pyruvate: step 2/4. Its function is as follows. Involved in the biosynthesis of branched-chain amino acids (BCAA). Catalyzes an alkyl-migration followed by a ketol-acid reduction of (S)-2-acetolactate (S2AL) to yield (R)-2,3-dihydroxy-isovalerate. In the isomerase reaction, S2AL is rearranged via a Mg-dependent methyl migration to produce 3-hydroxy-3-methyl-2-ketobutyrate (HMKB). In the reductase reaction, this 2-ketoacid undergoes a metal-dependent reduction by NADPH to yield (R)-2,3-dihydroxy-isovalerate. In Cupriavidus taiwanensis (strain DSM 17343 / BCRC 17206 / CCUG 44338 / CIP 107171 / LMG 19424 / R1) (Ralstonia taiwanensis (strain LMG 19424)), this protein is Ketol-acid reductoisomerase (NADP(+)).